Consider the following 206-residue polypeptide: Large ribosomal subunit protein uL4 (206 aa).

Belongs to the universal ribosomal protein uL4 family. As to quaternary structure, part of the 50S ribosomal subunit.

One of the primary rRNA binding proteins, this protein initially binds near the 5'-end of the 23S rRNA. It is important during the early stages of 50S assembly. It makes multiple contacts with different domains of the 23S rRNA in the assembled 50S subunit and ribosome. Functionally, forms part of the polypeptide exit tunnel. This is Large ribosomal subunit protein uL4 from Methylocella silvestris (strain DSM 15510 / CIP 108128 / LMG 27833 / NCIMB 13906 / BL2).